The chain runs to 268 residues: 3-methyl-2-oxobutanoate hydroxymethyltransferase (268 aa).

Mg(2+)-binding residues include Asp44 and Asp83. 3-methyl-2-oxobutanoate is bound by residues 44–45, Asp83, and Lys113; that span reads DS. Position 115 (Glu115) interacts with Mg(2+). Glu183 functions as the Proton acceptor in the catalytic mechanism.

Belongs to the PanB family. In terms of assembly, homodecamer; pentamer of dimers. It depends on Mg(2+) as a cofactor.

Its subcellular location is the cytoplasm. The enzyme catalyses 3-methyl-2-oxobutanoate + (6R)-5,10-methylene-5,6,7,8-tetrahydrofolate + H2O = 2-dehydropantoate + (6S)-5,6,7,8-tetrahydrofolate. The protein operates within cofactor biosynthesis; (R)-pantothenate biosynthesis; (R)-pantoate from 3-methyl-2-oxobutanoate: step 1/2. Functionally, catalyzes the reversible reaction in which hydroxymethyl group from 5,10-methylenetetrahydrofolate is transferred onto alpha-ketoisovalerate to form ketopantoate. The protein is 3-methyl-2-oxobutanoate hydroxymethyltransferase of Leptospira biflexa serovar Patoc (strain Patoc 1 / Ames).